The following is a 164-amino-acid chain: S-ribosylhomocysteine lyase (164 aa).

Fe cation contacts are provided by His61, His65, and Cys131.

Belongs to the LuxS family. Homodimer. Fe cation serves as cofactor.

It catalyses the reaction S-(5-deoxy-D-ribos-5-yl)-L-homocysteine = (S)-4,5-dihydroxypentane-2,3-dione + L-homocysteine. Functionally, involved in the synthesis of autoinducer 2 (AI-2) which is secreted by bacteria and is used to communicate both the cell density and the metabolic potential of the environment. The regulation of gene expression in response to changes in cell density is called quorum sensing. Catalyzes the transformation of S-ribosylhomocysteine (RHC) to homocysteine (HC) and 4,5-dihydroxy-2,3-pentadione (DPD). This chain is S-ribosylhomocysteine lyase, found in Bifidobacterium longum (strain NCC 2705).